A 321-amino-acid polypeptide reads, in one-letter code: MQLAQMLIPMVSAFAITIMFMPLFIGYMRYKKEGQVIREEGPSWHEKKSGTPTMGGLIFIAAIIVSAIWVGIWQHQLTLSVWVSLFILVLYGLLGFYDDFEKLVHHRNEGLKAWQKLAGQILGAIIFLIAYFHEGFDHTLWVPIIGNVSAAWFYVLFVIVWLVGFSNAVNLTDGLDGLVAGQTTISFGTYAIIAAHDGRTDVLIVCLVTIGAMLGFLMFNHKPAQIFMGDLGSLALGGMLAVVAILLHREWSLLLIGIIYVTETASVILQVGSFKLTGKRIFLMSPIHHHFEMKGWSEWQIDLTFWLVGLIGSGIYLAFFL.

A run of 10 helical transmembrane segments spans residues 6–26 (MLIP…LFIG), 53–73 (TMGG…VGIW), 77–97 (LTLS…LGFY), 121–141 (ILGA…HTLW), 144–164 (IIGN…WLVG), 175–195 (LDGL…IIAA), 200–220 (TDVL…LMFN), 226–246 (IFMG…VAIL), 251–271 (WSLL…ILQV), and 301–321 (IDLT…AFFL).

This sequence belongs to the glycosyltransferase 4 family. MraY subfamily. It depends on Mg(2+) as a cofactor.

It is found in the cell membrane. It catalyses the reaction UDP-N-acetyl-alpha-D-muramoyl-L-alanyl-gamma-D-glutamyl-L-lysyl-D-alanyl-D-alanine + di-trans,octa-cis-undecaprenyl phosphate = Mur2Ac(oyl-L-Ala-gamma-D-Glu-L-Lys-D-Ala-D-Ala)-di-trans,octa-cis-undecaprenyl diphosphate + UMP. Its pathway is cell wall biogenesis; peptidoglycan biosynthesis. In terms of biological role, catalyzes the initial step of the lipid cycle reactions in the biosynthesis of the cell wall peptidoglycan: transfers peptidoglycan precursor phospho-MurNAc-pentapeptide from UDP-MurNAc-pentapeptide onto the lipid carrier undecaprenyl phosphate, yielding undecaprenyl-pyrophosphoryl-MurNAc-pentapeptide, known as lipid I. The polypeptide is Phospho-N-acetylmuramoyl-pentapeptide-transferase (Lacticaseibacillus paracasei (strain ATCC 334 / BCRC 17002 / CCUG 31169 / CIP 107868 / KCTC 3260 / NRRL B-441) (Lactobacillus paracasei)).